Here is a 398-residue protein sequence, read N- to C-terminus: ATP-dependent RNA helicase eIF4A (398 aa).

The Q motif motif lies at 25–53 (DSFDSMDLKPELLRGIYAYGFERPSAIQQ). One can recognise a Helicase ATP-binding domain in the interval 56 to 226 (IMPIIKGSDV…TKFMRDPVRI (171 aa)). 69 to 76 (AQSGTGKT) contacts ATP. The short motif at 174-177 (DEAD) is the DEAD box element. Residues 237–398 (GIKQFYIAVE…EMPMNVADLI (162 aa)) enclose the Helicase C-terminal domain.

This sequence belongs to the DEAD box helicase family. eIF4A subfamily. In terms of assembly, component of the eIF4F complex, which composition varies with external and internal environmental conditions. It is composed of at least eIF4A, eIF4E and eIF4G.

The protein localises to the cytoplasm. It catalyses the reaction ATP + H2O = ADP + phosphate + H(+). Functionally, ATP-dependent RNA helicase which is a subunit of the eIF4F complex involved in cap recognition and is required for mRNA binding to ribosome. In the current model of translation initiation, eIF4A unwinds RNA secondary structures in the 5'-UTR of mRNAs which is necessary to allow efficient binding of the small ribosomal subunit, and subsequent scanning for the initiator codon. The sequence is that of ATP-dependent RNA helicase eIF4A (tif1) from Aspergillus clavatus (strain ATCC 1007 / CBS 513.65 / DSM 816 / NCTC 3887 / NRRL 1 / QM 1276 / 107).